The chain runs to 239 residues: Sugar fermentation stimulation protein homolog (239 aa).

The protein belongs to the SfsA family.

The polypeptide is Sugar fermentation stimulation protein homolog (Methylobacterium sp. (strain 4-46)).